The sequence spans 242 residues: ATP synthase subunit b (242 aa).

2 consecutive transmembrane segments (helical) span residues 8–28 (VLPF…ASAP) and 87–107 (LMDL…LIKF).

Belongs to the ATPase B chain family. As to quaternary structure, F-type ATPases have 2 components, F(1) - the catalytic core - and F(0) - the membrane proton channel. F(1) has five subunits: alpha(3), beta(3), gamma(1), delta(1), epsilon(1). F(0) has three main subunits: a(1), b(2) and c(10-14). The alpha and beta chains form an alternating ring which encloses part of the gamma chain. F(1) is attached to F(0) by a central stalk formed by the gamma and epsilon chains, while a peripheral stalk is formed by the delta and b chains.

It is found in the cell inner membrane. F(1)F(0) ATP synthase produces ATP from ADP in the presence of a proton or sodium gradient. F-type ATPases consist of two structural domains, F(1) containing the extramembraneous catalytic core and F(0) containing the membrane proton channel, linked together by a central stalk and a peripheral stalk. During catalysis, ATP synthesis in the catalytic domain of F(1) is coupled via a rotary mechanism of the central stalk subunits to proton translocation. Functionally, component of the F(0) channel, it forms part of the peripheral stalk, linking F(1) to F(0). In Desulfotalea psychrophila (strain LSv54 / DSM 12343), this protein is ATP synthase subunit b.